A 1189-amino-acid chain; its full sequence is Nucleolar protein NET1 (1189 aa).

S60 and S166 each carry phosphoserine. Disordered stretches follow at residues 160–260 and 345–1189; these read SKLN…ISSG and TAQD…FKKK. Over residues 166–180 the composition is skewed to low complexity; the sequence is SPQSVQPQQQIPSSS. The span at 200 to 210 shows a compositional bias: polar residues; the sequence is IRSATNGSMRV. Phosphoserine is present on residues S231 and S252. The segment covering 244–253 has biased composition (pro residues); sequence LPPPTQPQSP. Positions 368 to 381 are enriched in basic and acidic residues; sequence PEPRISEIEKELKE. Positions 391–407 are enriched in low complexity; sequence PAKAAKIPMKKPYLENG. The segment covering 432–450 has biased composition (polar residues); sequence ASLQRSQSSIADNNGSPVK. 4 positions are modified to phosphoserine: S437, S439, S447, and S452. Polar residues predominate over residues 470 to 486; the sequence is ASNTSITKSSNGESWGK. Phosphoserine is present on S497. A compositionally biased stretch (basic and acidic residues) spans 526-543; it reads NQVREKEDTNDKLLEKEI. Over residues 590–601 the composition is skewed to acidic residues; the sequence is IEDDGNDNDEVD. Residues 641-657 are compositionally biased toward polar residues; sequence SRTSGNSKNSKPYTTVL. Positions 659–668 are enriched in basic and acidic residues; that stretch reads KDIDNSKPDP. Position 676 is a phosphothreonine (T676). The segment covering 682-691 has biased composition (low complexity); it reads KRAAQLLAGA. The span at 692–702 shows a compositional bias: basic and acidic residues; it reads KKNEVPQKSTE. Acidic residues predominate over residues 710–725; the sequence is TDDESESGIETDFSSD. Basic and acidic residues predominate over residues 756 to 777; that stretch reads KDSKIINKEVDEERNDKRDSQK. Residues 778 to 792 show a composition bias toward polar residues; the sequence is KSAVSESSVTNSKIS. The span at 806–815 shows a compositional bias: basic and acidic residues; the sequence is KQNEATKVET. The segment covering 822–833 has biased composition (low complexity); that stretch reads SSFPVVGGSPSV. S830 carries the post-translational modification Phosphoserine. 3 stretches are compositionally biased toward basic and acidic residues: residues 884 to 897, 905 to 919, and 945 to 954; these read DLNKKAEGSKEPEK, ANDKNNSKEKEDSKS, and ANDKLKDLKA. Residues 969-999 show a composition bias toward low complexity; that stretch reads SNEKNNSSANDDDSSSSGSSTEDESSSSSSS. A compositionally biased stretch (polar residues) spans 1023 to 1039; sequence RSSSKIEAPSPSVNKKI. Residue T1042 is modified to Phosphothreonine. Low complexity predominate over residues 1055–1070; that stretch reads SSPPSVKSKTTSNPSS. A phosphoserine mark is found at S1056 and S1059. A compositionally biased stretch (basic and acidic residues) spans 1095–1109; it reads PDVKEKTSKSNEKSQ. Low complexity-rich tracts occupy residues 1123 to 1137 and 1158 to 1169; these read DSDSNSSSDSVSDSS and SFISAKSASAAL.

This sequence to yeast YKR010c. As to quaternary structure, component of the RENT complex which is composed of at least NET1, CDC14 and SIR2. Interacts with NSI1. In terms of processing, phosphorylated by CDC5.

It localises to the nucleus. It is found in the nucleolus. In terms of biological role, has a role in chromosome maintenance and is involved in mitotic exit. Inhibits the action of CDC14 by sequestering it in the nucleolus. Also binds to RNA polymerase I and stimulates rRNA synthesis. Influences RDNA chromatin by tethering SIR2 to rDNA in the nucleolus. The protein is Nucleolar protein NET1 (NET1) of Saccharomyces cerevisiae (strain ATCC 204508 / S288c) (Baker's yeast).